The primary structure comprises 522 residues: Protein tweety homolog 3 (522 aa).

The Extracellular segment spans residues Met-1–Ser-43. Residues Leu-44 to Phe-64 form a helical membrane-spanning segment. Over Tyr-65–Thr-87 the chain is Cytoplasmic. Residues Val-88–Gly-108 form a helical membrane-spanning segment. The Extracellular segment spans residues Asn-109–Leu-211. Positions 111 and 114 each coordinate Ca(2+). N-linked (GlcNAc...) asparagine glycosylation is found at Asn-127 and Asn-145. A helical transmembrane segment spans residues Gly-212 to Ile-232. Residues Arg-233–Thr-238 lie on the Cytoplasmic side of the membrane. A helical transmembrane segment spans residues Leu-239–Leu-259. The Extracellular portion of the chain corresponds to Glu-260 to Glu-386. 2 disulfide bridges follow: Cys-271/Cys-381 and Cys-299/Cys-366. N-linked (GlcNAc...) asparagine glycosylation occurs at Asn-351. A helical membrane pass occupies residues Gly-387–Cys-407. Residues Ser-408–His-522 are Cytoplasmic-facing. The disordered stretch occupies residues Gln-483–His-522.

It belongs to the tweety family. In terms of assembly, homotetramer; disulfide-linked. Forms cis-homodimers in the presence of Ca(2+).

The protein localises to the cell membrane. It carries out the reaction chloride(in) = chloride(out). The enzyme catalyses L-glutamate(out) = L-glutamate(in). Functionally, may act as a calcium-independent, swelling-dependent volume-regulated anion channel (VRAC-swell) which plays a pivotal role in the process of regulatory volume decrease (RVD) in the brain through the efflux of anions like chloride and organic osmolytes like glutamate. Probable large-conductance Ca(2+)-activated chloride channel. The sequence is that of Protein tweety homolog 3 (ttyh3) from Xenopus laevis (African clawed frog).